The sequence spans 257 residues: Zinc transporter ZupT (257 aa).

Helical transmembrane passes span 5 to 25 (LILT…GVLG), 33 to 53 (LAFS…MEML), 61 to 81 (GMSP…YFGL), 109 to 129 (AILL…ATFV), 137 to 157 (LGFG…LAVA), 171 to 191 (IFWA…AWLI), 195 to 215 (LVSP…MVAL), and 236 to 256 (GVLC…TIGI). Residues N120 and E123 each contribute to the Fe(2+) site. Zn(2+) is bound by residues E123 and H148. Positions 149, 152, and 181 each coordinate Fe(2+). Zn(2+) is bound at residue E152.

Belongs to the ZIP transporter (TC 2.A.5) family. ZupT subfamily.

The protein localises to the cell inner membrane. It carries out the reaction Zn(2+)(in) = Zn(2+)(out). Mediates zinc uptake. May also transport other divalent cations. This Salmonella paratyphi A (strain ATCC 9150 / SARB42) protein is Zinc transporter ZupT.